The following is a 660-amino-acid chain: DNA ligase (660 aa).

Residues 33–37, 82–83, and Glu110 each bind NAD(+); these read DFVYD and SL. The active-site N6-AMP-lysine intermediate is Lys112. Residues Arg133, Glu167, Lys281, and Lys305 each contribute to the NAD(+) site. Residues Cys396, Cys399, Cys412, and Cys417 each coordinate Zn(2+). The BRCT domain maps to 583–660; that stretch reads DENRLLAGKK…SFEDIKSYLN (78 aa).

It belongs to the NAD-dependent DNA ligase family. LigA subfamily. Requires Mg(2+) as cofactor. Mn(2+) is required as a cofactor.

It catalyses the reaction NAD(+) + (deoxyribonucleotide)n-3'-hydroxyl + 5'-phospho-(deoxyribonucleotide)m = (deoxyribonucleotide)n+m + AMP + beta-nicotinamide D-nucleotide.. In terms of biological role, DNA ligase that catalyzes the formation of phosphodiester linkages between 5'-phosphoryl and 3'-hydroxyl groups in double-stranded DNA using NAD as a coenzyme and as the energy source for the reaction. It is essential for DNA replication and repair of damaged DNA. The protein is DNA ligase of Borrelia garinii subsp. bavariensis (strain ATCC BAA-2496 / DSM 23469 / PBi) (Borreliella bavariensis).